The chain runs to 511 residues: Maturase K (511 aa).

This sequence belongs to the intron maturase 2 family. MatK subfamily.

The protein resides in the plastid. It is found in the chloroplast. In terms of biological role, usually encoded in the trnK tRNA gene intron. Probably assists in splicing its own and other chloroplast group II introns. In Trifolium burchellianum (Wild clover), this protein is Maturase K.